Consider the following 542-residue polypeptide: Peptide chain release factor 3 (542 aa).

In terms of domain architecture, tr-type G spans 14–283; that stretch reads DKRRNFAIIS…AFLEYALKPG (270 aa). Residues 23–30, 91–95, and 145–148 each bind GTP; these read SHPDAGKT, DTPGH, and NKMD.

The protein belongs to the TRAFAC class translation factor GTPase superfamily. Classic translation factor GTPase family. PrfC subfamily.

The protein resides in the cytoplasm. Increases the formation of ribosomal termination complexes and stimulates activities of RF-1 and RF-2. It binds guanine nucleotides and has strong preference for UGA stop codons. It may interact directly with the ribosome. The stimulation of RF-1 and RF-2 is significantly reduced by GTP and GDP, but not by GMP. This Trichodesmium erythraeum (strain IMS101) protein is Peptide chain release factor 3.